A 173-amino-acid chain; its full sequence is Protein SHI RELATED SEQUENCE 8 (173 aa).

Residues cysteine 52, cysteine 63, cysteine 68, cysteine 72, and cysteine 79 each contribute to the Zn(2+) site. The segment at residues 52-79 is a DNA-binding region (zn(2)-C6 fungal-type; degenerate); it reads CQDFGNQAKKDCSHMRCRTCCKSRGFEC. Over residues 100–110 the composition is skewed to low complexity; sequence LATVQPQTQLP. Residues 100–121 are disordered; that stretch reads LATVQPQTQLPRGESVPKRHRE.

Belongs to the SHI protein family.

The protein localises to the nucleus. In terms of biological role, transcription activator that binds DNA on 5'-ACTCTAC-3' and promotes auxin homeostasis-regulating gene expression (e.g. YUC genes), as well as genes affecting stamen development, cell expansion and timing of flowering. Synergistically with other SHI-related proteins, regulates gynoecium, stamen and leaf development in a dose-dependent manner, controlling apical-basal patterning. Promotes style and stigma formation, and influence vascular development during gynoecium development. May also have a role in the formation and/or maintenance of the shoot apical meristem (SAM). The polypeptide is Protein SHI RELATED SEQUENCE 8 (SRS8) (Arabidopsis thaliana (Mouse-ear cress)).